A 301-amino-acid chain; its full sequence is Protoheme IX farnesyltransferase (301 aa).

A run of 9 helical transmembrane segments spans residues 29-49 (VVAL…PGAV), 51-71 (LQPL…AAAF), 101-121 (AFSF…WWVN), 123-143 (LTAW…TAYL), 150-170 (NIVI…TAVT), 177-197 (ALLL…ALAI), 223-243 (CILL…LVGM), 244-264 (SGPV…YKAW), and 281-301 (FSIY…YLWG).

The protein belongs to the UbiA prenyltransferase family. Protoheme IX farnesyltransferase subfamily.

Its subcellular location is the cell inner membrane. It carries out the reaction heme b + (2E,6E)-farnesyl diphosphate + H2O = Fe(II)-heme o + diphosphate. The protein operates within porphyrin-containing compound metabolism; heme O biosynthesis; heme O from protoheme: step 1/1. Converts heme B (protoheme IX) to heme O by substitution of the vinyl group on carbon 2 of heme B porphyrin ring with a hydroxyethyl farnesyl side group. In Shewanella denitrificans (strain OS217 / ATCC BAA-1090 / DSM 15013), this protein is Protoheme IX farnesyltransferase.